The chain runs to 196 residues: GTP cyclohydrolase-2 (196 aa).

Position 49–53 (49–53 (RIHSE)) interacts with GTP. Positions 54, 65, and 67 each coordinate Zn(2+). GTP is bound by residues Gln70, 92–94 (EGR), and Thr114. Asp126 serves as the catalytic Proton acceptor. The active-site Nucleophile is Arg128. Residues Thr149 and Lys154 each contribute to the GTP site.

Belongs to the GTP cyclohydrolase II family. In terms of assembly, homodimer. The cofactor is Zn(2+).

The enzyme catalyses GTP + 4 H2O = 2,5-diamino-6-hydroxy-4-(5-phosphoribosylamino)-pyrimidine + formate + 2 phosphate + 3 H(+). Its pathway is cofactor biosynthesis; riboflavin biosynthesis; 5-amino-6-(D-ribitylamino)uracil from GTP: step 1/4. Catalyzes the conversion of GTP to 2,5-diamino-6-ribosylamino-4(3H)-pyrimidinone 5'-phosphate (DARP), formate and pyrophosphate. The protein is GTP cyclohydrolase-2 of Buchnera aphidicola subsp. Schizaphis graminum (strain Sg).